The following is a 207-amino-acid chain: Outer-membrane lipoprotein LolB (207 aa).

Positions 1–23 are cleaved as a signal peptide; sequence MINLRRFTKFTLAGLTALSLLGG. Cysteine 24 carries the N-palmitoyl cysteine lipid modification. Cysteine 24 carries S-diacylglycerol cysteine lipidation.

The protein belongs to the LolB family. In terms of assembly, monomer.

The protein localises to the cell outer membrane. Functionally, plays a critical role in the incorporation of lipoproteins in the outer membrane after they are released by the LolA protein. This is Outer-membrane lipoprotein LolB from Shewanella amazonensis (strain ATCC BAA-1098 / SB2B).